Consider the following 171-residue polypeptide: Secreted LysM effector Blys4 (171 aa).

In terms of domain architecture, LysM spans 125–169; it reads KPYTIHQGDTCWDIAESHSVGVDDILTLNPELDCDKLSIGSQICL.

This sequence belongs to the secreted LysM effector family.

In terms of biological role, might have a role in sequestration of chitin oligosaccharides (breakdown products of fungal cell walls that are released during invasion and act as triggers of host immunity) to dampen host defense. This Beauveria bassiana (strain ARSEF 2860) (White muscardine disease fungus) protein is Secreted LysM effector Blys4.